Reading from the N-terminus, the 352-residue chain is Extracellular minor metalloprotease (352 aa).

2 disordered regions span residues 41 to 86 (GNKP…QPRR) and 144 to 164 (TARS…ELTH). Residues 48-57 (PTEKNARAGE) show a composition bias toward basic and acidic residues. 2 stretches are compositionally biased toward low complexity: residues 71–85 (ARQT…QQPR) and 144–156 (TARS…SPST). Histidine 160 contributes to the Zn(2+) binding site. Glutamate 161 is an active-site residue. Histidine 164 and glutamate 184 together coordinate Zn(2+). The active-site Proton donor is the histidine 262. Residues 303-325 (TPTSDHLRPRHGETRAGLRTKRG) form a disordered region. The segment covering 304–325 (PTSDHLRPRHGETRAGLRTKRG) has biased composition (basic and acidic residues).

Belongs to the peptidase M4 family. Requires Zn(2+) as cofactor.

It is found in the secreted. The chain is Extracellular minor metalloprotease (smp) from Serratia marcescens (strain ATCC 21074 / E-15).